The chain runs to 1050 residues: Ankyrin repeat domain-containing protein 27 (1050 aa).

The sufficient for GEF activity towards RAB21 stretch occupies residues 1 to 372 (MALYDEDLLK…RQGSLSAKPP (372 aa)). The VPS9 domain maps to 233 to 371 (ASEDAAFNKI…IRQGSLSAKP (139 aa)). ANK repeat units follow at residues 396-426 (SPTDCLFKHIASGNQKEVERLLSQEDHDKDA), 462-491 (RGHTPLHVAALCGQASLIDLLVSKGAVVNA), 495-524 (HGATPLHLACQKGYQSVTLLLLHYKASAEV), 528-560 (NGNTPLHLACTYGHEDCVKALVYYDVESCRLDI), 564-593 (KGDTPLHIAARWGYQAIIETLLQNGASPEI), and 597-627 (LKETPLKCALNSKILSVMEAYHLSFERRQKS). Residues 396-460 (SPTDCLFKHI…PSVVTPFSRD (65 aa)) are sufficient for interaction with VPS29. Residues 451–600 (PSVVTPFSRD…PEIQNRLKET (150 aa)) form an interaction with RAB38 region. The interval 451–730 (PSVVTPFSRD…APAQKRLAKV (280 aa)) is interaction with RAB32. The interval 630-665 (APVQSLQRSVDSISQESSTSSFSSMSAGSRQEETKK) is disordered. Residues 638 to 658 (SVDSISQESSTSSFSSMSAGS) show a composition bias toward low complexity. A required for interaction with VAMP7 region spans residues 658-707 (SRQEETKKDYREVEKLLRAVADGDLEMVRYLLEWTEEDLEDAEDTVSAVD). ANK repeat units lie at residues 668 to 698 (REVEKLLRAVADGDLEMVRYLLEWTEEDLED), 743 to 772 (DGSSPLYVAALHGRADLIPLLLKHGANAGA), 776 to 805 (DQAVPLHLACQQGHFQVVKCLLDSNAKPNK), 809 to 838 (SGNTPLIYACSGGHHEVVALLLQHGAAINT), and 842 to 871 (KGNTALHEAVIEKHVFVVELLLLHGASVQV). Residues 692–746 (TEEDLEDAEDTVSAVDPEFCHPLCQCPKCAPAQKRLAKVPASGLGVNVTSQDGSS) form a sufficient for interaction with VPS29 region. Phosphoserine occurs at positions 962 and 970. Positions 987-1050 (PAQSGSHAAE…TPQEVSASRS (64 aa)) are disordered. Over residues 994–1007 (AAEKGNSDWPERPR) the composition is skewed to basic and acidic residues. At T1023 the chain carries Phosphothreonine. The span at 1040 to 1050 (STPQEVSASRS) shows a compositional bias: polar residues.

As to quaternary structure, interacts with RAB21 (GDP-bound form), VPS29, KIF5A, KIF5C, GOLGA4. Interacts with RAB32 (GTP-bound form), RAB38 (GTP-bound form), VAMP7. Interacts with low affinity with RAB5. ANKRD27:RAB32 heterodimers can homodimerize to form tetramers. Can interact with RAB38 or RAB32, VPS29 and VAMP7 simultaneously. A decreased interaction with RAB32 seen in the presence of SGSM2.

It is found in the early endosome. The protein localises to the late endosome. It localises to the cytoplasmic vesicle membrane. The protein resides in the lysosome. Its subcellular location is the cell membrane. It is found in the melanosome. Functionally, may be a guanine exchange factor (GEF) for Rab21, Rab32 and Rab38 and regulate endosome dynamics. May regulate the participation of VAMP7 in membrane fusion events; in vitro inhibits VAMP7-mediated SNARE complex formation by trapping VAMP7 in a closed, fusogenically inactive conformation. Involved in peripheral melanosomal distribution of TYRP1 in melanocytes; the function, which probably is implicating vesicle-trafficking, includes cooperation with Rab32, Rab38 and VAMP7. Involved in the regulation of neurite growth; the function seems to require its GEF activity, probably towards Rab21, and VAMP7 but not Rab32/38. Proposed to be involved in Golgi sorting of VAMP7 and transport of VAMP7 vesicles to the cell surface; the function seems to implicate kinesin heavy chain isoform 5 proteins, GOLGA4, RAB21 and MACF1. Required for the colocalization of VAMP7 and Rab21, probably on TGN sites. Involved in GLUT1 endosome-to-plasma membrane trafficking; the function is dependent of association with VPS29. Regulates the proper trafficking of melanogenic enzymes TYR, TYRP1 and DCT/TYRP2 to melanosomes in melanocytes. In Pongo abelii (Sumatran orangutan), this protein is Ankyrin repeat domain-containing protein 27 (ANKRD27).